The primary structure comprises 393 residues: Triacylglycerol lipase 1 (393 aa).

Positions Met-1–Gln-20 are cleaved as a signal peptide. Asn-41 is a glycosylation site (N-linked (GlcNAc...) asparagine). The Nucleophile role is filled by Ser-166. N-linked (GlcNAc...) asparagine glycosylation is present at Asn-261. Active-site charge relay system residues include Asp-334 and His-363.

This sequence belongs to the AB hydrolase superfamily. Lipase family. In terms of tissue distribution, expressed in seedlings, roots, leaves, flowers and siliques. Specifically expressed in the epidermis.

It localises to the secreted. It carries out the reaction a triacylglycerol + H2O = a diacylglycerol + a fatty acid + H(+). It catalyses the reaction 1,2,3-tributanoylglycerol + H2O = dibutanoylglycerol + butanoate + H(+). The catalysed reaction is 1,2,3-trioctanoylglycerol + H2O = dioctanoylglycerol + octanoate + H(+). It functions in the pathway lipid metabolism; glycerolipid metabolism. In terms of biological role, triacylglycerol (TAG) lipase active on triolein, trioctanoin, tributyrin and 1,3-Diolein, but not on phospho- and galactolipids. Involved but dispensable for TAG storage breakdown during seed germination. The polypeptide is Triacylglycerol lipase 1 (Arabidopsis thaliana (Mouse-ear cress)).